The primary structure comprises 315 residues: N-acetylneuraminate lyase (315 aa).

Positions 59 and 60 each coordinate aceneuramate. Y149 functions as the Proton donor in the catalytic mechanism. K177 (schiff-base intermediate with substrate) is an active-site residue. Aceneuramate contacts are provided by S179, G202, D204, E205, and G221.

This sequence belongs to the DapA family. NanA subfamily. As to quaternary structure, homotetramer.

The protein resides in the cytoplasm. The catalysed reaction is aceneuramate = aldehydo-N-acetyl-D-mannosamine + pyruvate. It participates in amino-sugar metabolism; N-acetylneuraminate degradation; D-fructose 6-phosphate from N-acetylneuraminate: step 1/5. In terms of biological role, catalyzes the reversible aldol cleavage of N-acetylneuraminic acid (sialic acid; Neu5Ac) to form pyruvate and N-acetylmannosamine (ManNAc) via a Schiff base intermediate. Cannot use 2,7-anhydro-Neu5Ac. Involved in the degradation of sialic acid, which is present in the host mucus layer and represents a much-coveted source of nutrients for R.gnavus, a prevalent member of the normal gut microbiota. The sequence is that of N-acetylneuraminate lyase from Mediterraneibacter gnavus (strain ATCC 29149 / DSM 114966 / JCM 6515 / VPI C7-9) (Ruminococcus gnavus).